Reading from the N-terminus, the 377-residue chain is Probable trehalose-phosphate phosphatase G (377 aa).

Positions 1-20 (MDLNINKTTPVLSDPTTPVS) are disordered.

It belongs to the trehalose phosphatase family. The cofactor is a divalent metal cation.

The catalysed reaction is alpha,alpha-trehalose 6-phosphate + H2O = alpha,alpha-trehalose + phosphate. It participates in glycan biosynthesis; trehalose biosynthesis. Its function is as follows. Removes the phosphate from trehalose 6-phosphate to produce free trehalose. Trehalose accumulation in plant may improve abiotic stress tolerance. The polypeptide is Probable trehalose-phosphate phosphatase G (TPPG) (Arabidopsis thaliana (Mouse-ear cress)).